We begin with the raw amino-acid sequence, 107 residues long: Ig kappa chain V-VI region NQ5-78.2.6 (107 aa).

Residues 1 to 23 form a framework-1 region; it reads QILLTQSPAIMSASPGQKVTMTC. Cysteine 23 and cysteine 87 are oxidised to a cystine. Residues 24–33 are complementarity-determining-1; sequence SASSSVSYMH. The interval 34 to 48 is framework-2; that stretch reads WYQQKSGTSPKRWIY. The segment at 49 to 55 is complementarity-determining-2; sequence DTSKLAS. The interval 56-87 is framework-3; sequence GVPARFXGSGSATSYSLTITSMQAEDAATYYC. A complementarity-determining-3 region spans residues 88 to 96; that stretch reads QQWSSNPLT. Residues 97–106 form a framework-4 region; it reads FGSGTKLEXK.

Functionally, anti-2-phenyl oxazolone (PHOX) Antibody. The chain is Ig kappa chain V-VI region NQ5-78.2.6 from Mus musculus (Mouse).